Here is a 264-residue protein sequence, read N- to C-terminus: Thymidylate synthase (264 aa).

Arg21 lines the dUMP pocket. Position 51 (His51) interacts with (6R)-5,10-methylene-5,6,7,8-tetrahydrofolate. Residue 126-127 coordinates dUMP; that stretch reads RR. The active-site Nucleophile is the Cys146. DUMP-binding positions include 166 to 169, Asn177, and 207 to 209; these read RSCD and HLY. Asp169 provides a ligand contact to (6R)-5,10-methylene-5,6,7,8-tetrahydrofolate. Ala263 contacts (6R)-5,10-methylene-5,6,7,8-tetrahydrofolate.

It belongs to the thymidylate synthase family. Bacterial-type ThyA subfamily. In terms of assembly, homodimer.

Its subcellular location is the cytoplasm. The catalysed reaction is dUMP + (6R)-5,10-methylene-5,6,7,8-tetrahydrofolate = 7,8-dihydrofolate + dTMP. It functions in the pathway pyrimidine metabolism; dTTP biosynthesis. Functionally, catalyzes the reductive methylation of 2'-deoxyuridine-5'-monophosphate (dUMP) to 2'-deoxythymidine-5'-monophosphate (dTMP) while utilizing 5,10-methylenetetrahydrofolate (mTHF) as the methyl donor and reductant in the reaction, yielding dihydrofolate (DHF) as a by-product. This enzymatic reaction provides an intracellular de novo source of dTMP, an essential precursor for DNA biosynthesis. The sequence is that of Thymidylate synthase from Cronobacter sakazakii (strain ATCC BAA-894) (Enterobacter sakazakii).